Here is a 235-residue protein sequence, read N- to C-terminus: Urease accessory protein UreF (235 aa).

This sequence belongs to the UreF family. In terms of assembly, ureD, UreF and UreG form a complex that acts as a GTP-hydrolysis-dependent molecular chaperone, activating the urease apoprotein by helping to assemble the nickel containing metallocenter of UreC. The UreE protein probably delivers the nickel.

The protein resides in the cytoplasm. In terms of biological role, required for maturation of urease via the functional incorporation of the urease nickel metallocenter. This Ureaplasma urealyticum serovar 10 (strain ATCC 33699 / Western) protein is Urease accessory protein UreF.